We begin with the raw amino-acid sequence, 110 residues long: Host transcription reprogramming factor 2 (110 aa).

The first 18 residues, Met-1–Ala-18, serve as a signal peptide directing secretion. The C2H2-type zinc finger occupies Ile-68–His-96. The tract at residues Lys-88–Thr-110 is disordered. Residues Pro-100 to Thr-110 show a composition bias toward basic and acidic residues.

Its subcellular location is the secreted. It localises to the host nucleus. Functionally, secreted effector that translocates into the nuclei of host cells to reprogram the expression of immunity-associated genes by binding to effector binding elements (EBEs) in rice. Binds the 5'-CCACCTCC-3' EBE of promoters from targeted rice genes and probably recruits a yet to be determined host repressor. Causes ambivalent immunity with increased susceptibility to the hemibiotrophic pathogens Magnaporthe oryzae and Xanthomonas oryzae pv. oryzae, but enhances resistance to Cochliobolus miyabeanus, a necrotrophic pathogen. In Pyricularia oryzae (strain 70-15 / ATCC MYA-4617 / FGSC 8958) (Rice blast fungus), this protein is Host transcription reprogramming factor 2.